A 58-amino-acid chain; its full sequence is Amyloid-beta precursor protein (58 aa).

At 1 to 33 (SEVKMDAEFRHDSGYEVHHQKLVFFAEDVGSNK) the chain is on the extracellular side. H11, Y15, H18, and H19 together coordinate Cu(2+). Zn(2+) contacts are provided by H11, Y15, H18, and H19. Residues 34–57 (GAIIGLMVGGVVIATVIVITLVML) traverse the membrane as a helical segment. K58 is a topological domain (cytoplasmic).

This sequence belongs to the APP family. Binds, via its C-terminus, to the PID domain of several cytoplasmic proteins, including APBB family members, the APBA family, MAPK8IP1, SHC1 and NUMB and DAB1. Binding to DAB1 inhibits its serine phosphorylation. Interacts (via NPXY motif) with DAB2 (via PID domain); the interaction is impaired by tyrosine phosphorylation of the NPXY motif. Also interacts with GPCR-like protein BPP, APPBP1, IB1, KNS2 (via its TPR domains), APPBP2 (via BaSS) and DDB1. In vitro, it binds MAPT via the MT-binding domains. Associates with microtubules in the presence of ATP and in a kinesin-dependent manner. Interacts, through a C-terminal domain, with GNAO1. Interacts with CPEB1, ANKS1B and AGER. Interacts with ITM2B. Interacts with ITM2C. Interacts with IDE. Can form homodimers; dimerization is enhanced in the presence of Cu(2+) ions. Can form homodimers; this is promoted by heparin binding. Interacts with SORL1 (via N-terminal ectodomain); this interaction retains APP in the trans-Golgi network and reduces processing into soluble APP-alpha and amyloid-beta peptides. Interacts with PLD3. Interacts with VDAC1. Interacts with NSG1; could regulate APP processing. Amyloid-beta protein 42 interacts with FPR2. Interacts with LRRK2. Interacts (via cytoplasmic domain) with KIF5B. Interacts (via C-terminus) with APBB2/FE65L1 (via C-terminus). Interacts (via intracellular domain) with APBB3. In terms of processing, proteolytically processed under normal cellular conditions. Cleavage either by alpha-secretase, beta-secretase or theta-secretase leads to generation and extracellular release of soluble APP peptides, S-APP-alpha and S-APP-beta, and the retention of corresponding membrane-anchored C-terminal fragments, C80, C83 and C99. Subsequent processing of C80 and C83 by gamma-secretase yields P3 peptides. This is the major secretory pathway and is non-amyloidogenic. Alternatively, presenilin/nicastrin-mediated gamma-secretase processing of C99 releases the amyloid-beta proteins, amyloid-beta protein 40 and amyloid-beta protein 42, major components of amyloid plaques, and the cytotoxic C-terminal fragments, gamma-CTF(50), gamma-CTF(57) and gamma-CTF(59). PSEN1 cleavage is more efficient with C83 than with C99 as substrate (in vitro). Amyloid-beta protein 40 and Amyloid-beta protein 42 are cleaved by ACE. Many other minor amyloid-beta peptides, amyloid-beta 1-X peptides, are found in cerebral spinal fluid (CSF) including the amyloid-beta X-15 peptides, produced from the cleavage by alpha-secretase.

The protein localises to the cell membrane. The protein resides in the membrane. Its subcellular location is the perikaryon. It localises to the cell projection. It is found in the growth cone. The protein localises to the clathrin-coated pit. The protein resides in the early endosome. Its subcellular location is the cytoplasmic vesicle. It localises to the secreted. It is found in the cell surface. The protein localises to the nucleus. The protein resides in the cytoplasm. Functions as a cell surface receptor and performs physiological functions on the surface of neurons relevant to neurite growth, neuronal adhesion and axonogenesis. Interaction between APP molecules on neighboring cells promotes synaptogenesis. Involved in cell mobility and transcription regulation through protein-protein interactions. Can promote transcription activation through binding to APBB1-KAT5 and inhibit Notch signaling through interaction with Numb. Couples to apoptosis-inducing pathways such as those mediated by G(o) and JIP. Inhibits G(o)-alpha ATPase activity. Acts as a kinesin I membrane receptor, mediating the axonal transport of beta-secretase and presenilin 1. By acting as a kinesin I membrane receptor, plays a role in axonal anterograde transport of cargo towards synapses in axons. May be involved in copper homeostasis/oxidative stress through copper ion reduction. In vitro, copper-metallated APP induces neuronal death directly or is potentiated through Cu(2+)-mediated low-density lipoprotein oxidation. Can regulate neurite outgrowth through binding to components of the extracellular matrix such as heparin and collagen I and IV. Induces a AGER-dependent pathway that involves activation of p38 MAPK, resulting in internalization of amyloid-beta peptide and mitochondrial dysfunction in cultured cortical neurons. Provides Cu(2+) ions for GPC1 which are required for release of nitric oxide (NO) and subsequent degradation of the heparan sulfate chains on GPC1. The polypeptide is Amyloid-beta precursor protein (APP) (Ovis aries (Sheep)).